The following is a 1382-amino-acid chain: DNA-directed RNA polymerase subunit beta'' (1382 aa).

4 residues coordinate Zn(2+): cysteine 224, cysteine 294, cysteine 301, and cysteine 304.

This sequence belongs to the RNA polymerase beta' chain family. RpoC2 subfamily. In plastids the minimal PEP RNA polymerase catalytic core is composed of four subunits: alpha, beta, beta', and beta''. When a (nuclear-encoded) sigma factor is associated with the core the holoenzyme is formed, which can initiate transcription. It depends on Zn(2+) as a cofactor.

Its subcellular location is the plastid. The protein resides in the chloroplast. It carries out the reaction RNA(n) + a ribonucleoside 5'-triphosphate = RNA(n+1) + diphosphate. In terms of biological role, DNA-dependent RNA polymerase catalyzes the transcription of DNA into RNA using the four ribonucleoside triphosphates as substrates. This is DNA-directed RNA polymerase subunit beta'' from Liriodendron tulipifera (Tuliptree).